The chain runs to 88 residues: Small ribosomal subunit protein uS15c (88 aa).

Belongs to the universal ribosomal protein uS15 family. As to quaternary structure, part of the 30S ribosomal subunit.

The protein resides in the plastid. It is found in the chloroplast. The protein is Small ribosomal subunit protein uS15c (rps15) of Physcomitrium patens (Spreading-leaved earth moss).